A 468-amino-acid chain; its full sequence is Eukaryotic translation initiation factor 3 subunit M (468 aa).

The interval 40 to 61 (VAPLIEPLRQQEQSEEEPDRKQ) is disordered. A PCI domain is found at 206-377 (DLELAQTHVV…SEFLVHRATY (172 aa)). A disordered region spans residues 419-468 (QAAAEEVGQGKSGDKGAKGGDRRRNPQQQQQSQPSQPQQAREVELVGGAE). Positions 430-442 (SGDKGAKGGDRRR) are enriched in basic and acidic residues. Residues 444–457 (PQQQQQSQPSQPQQ) show a composition bias toward low complexity.

This sequence belongs to the eIF-3 subunit M family. In terms of assembly, component of the eukaryotic translation initiation factor 3 (eIF-3) complex.

The protein resides in the cytoplasm. Functionally, component of the eukaryotic translation initiation factor 3 (eIF-3) complex, which is involved in protein synthesis of a specialized repertoire of mRNAs and, together with other initiation factors, stimulates binding of mRNA and methionyl-tRNAi to the 40S ribosome. The eIF-3 complex specifically targets and initiates translation of a subset of mRNAs involved in cell proliferation. This is Eukaryotic translation initiation factor 3 subunit M from Aspergillus fumigatus (strain CBS 144.89 / FGSC A1163 / CEA10) (Neosartorya fumigata).